Reading from the N-terminus, the 412-residue chain is Serine hydroxymethyltransferase 1 (412 aa).

(6S)-5,6,7,8-tetrahydrofolate-binding positions include L116 and 120–122 (GHL). K225 carries the post-translational modification N6-(pyridoxal phosphate)lysine.

The protein belongs to the SHMT family. As to quaternary structure, homodimer. Pyridoxal 5'-phosphate serves as cofactor.

Its subcellular location is the cytoplasm. It carries out the reaction (6R)-5,10-methylene-5,6,7,8-tetrahydrofolate + glycine + H2O = (6S)-5,6,7,8-tetrahydrofolate + L-serine. Its pathway is one-carbon metabolism; tetrahydrofolate interconversion. The protein operates within amino-acid biosynthesis; glycine biosynthesis; glycine from L-serine: step 1/1. In terms of biological role, catalyzes the reversible interconversion of serine and glycine with tetrahydrofolate (THF) serving as the one-carbon carrier. This reaction serves as the major source of one-carbon groups required for the biosynthesis of purines, thymidylate, methionine, and other important biomolecules. Also exhibits THF-independent aldolase activity toward beta-hydroxyamino acids, producing glycine and aldehydes, via a retro-aldol mechanism. The polypeptide is Serine hydroxymethyltransferase 1 (Pseudomonas fluorescens (strain Pf0-1)).